The sequence spans 242 residues: Large ribosomal subunit protein uL1 (242 aa).

The protein belongs to the universal ribosomal protein uL1 family. Part of the 50S ribosomal subunit.

In terms of biological role, binds directly to 23S rRNA. The L1 stalk is quite mobile in the ribosome, and is involved in E site tRNA release. Functionally, protein L1 is also a translational repressor protein, it controls the translation of the L11 operon by binding to its mRNA. This is Large ribosomal subunit protein uL1 from Streptomyces sp. (strain FRI-5).